Consider the following 148-residue polypeptide: 3-dehydroquinate dehydratase (148 aa).

The active-site Proton acceptor is the Tyr-26. Positions 77, 83, and 90 each coordinate substrate. His-103 (proton donor) is an active-site residue. Substrate is bound by residues Leu-104 to Ser-105 and Arg-114.

The protein belongs to the type-II 3-dehydroquinase family. As to quaternary structure, homododecamer.

It carries out the reaction 3-dehydroquinate = 3-dehydroshikimate + H2O. Its pathway is metabolic intermediate biosynthesis; chorismate biosynthesis; chorismate from D-erythrose 4-phosphate and phosphoenolpyruvate: step 3/7. Its function is as follows. Catalyzes a trans-dehydration via an enolate intermediate. This chain is 3-dehydroquinate dehydratase (aroQ), found in Pasteurella multocida (strain Pm70).